A 284-amino-acid chain; its full sequence is uncharacterized protein (284 aa).

10 N-linked (GlcNAc...) asparagine; by host glycosylation sites follow: N79, N102, N111, N147, N162, N174, N196, N211, N228, and N234. A helical transmembrane segment spans residues 239-259 (AFTYGSWGVAMLLFAAVMVLV).

The protein belongs to the RL11 family.

It localises to the membrane. This is an uncharacterized protein from Human cytomegalovirus (strain AD169) (HHV-5).